A 379-amino-acid chain; its full sequence is Bifunctional enzyme IspD/IspF (379 aa).

The segment at 1-213 (MSQVSLVVMG…QGFEPPFGGC (213 aa)) is 2-C-methyl-D-erythritol 4-phosphate cytidylyltransferase. The segment at 214 to 379 (YGGSGFDVHA…DWTKHACFNR (166 aa)) is 2-C-methyl-D-erythritol 2,4-cyclodiphosphate synthase. The a divalent metal cation site is built by aspartate 220 and histidine 222. 4-CDP-2-C-methyl-D-erythritol 2-phosphate is bound by residues 220 to 222 (DVH) and 246 to 247 (HS). Histidine 254 provides a ligand contact to a divalent metal cation. 4-CDP-2-C-methyl-D-erythritol 2-phosphate-binding positions include 268–270 (DIG), 273–277 (FPDSD), 344–347 (TTTE), phenylalanine 351, and arginine 354.

It in the N-terminal section; belongs to the IspD/TarI cytidylyltransferase family. IspD subfamily. This sequence in the C-terminal section; belongs to the IspF family. The cofactor is a divalent metal cation.

It catalyses the reaction 2-C-methyl-D-erythritol 4-phosphate + CTP + H(+) = 4-CDP-2-C-methyl-D-erythritol + diphosphate. The enzyme catalyses 4-CDP-2-C-methyl-D-erythritol 2-phosphate = 2-C-methyl-D-erythritol 2,4-cyclic diphosphate + CMP. It functions in the pathway isoprenoid biosynthesis; isopentenyl diphosphate biosynthesis via DXP pathway; isopentenyl diphosphate from 1-deoxy-D-xylulose 5-phosphate: step 2/6. Its pathway is isoprenoid biosynthesis; isopentenyl diphosphate biosynthesis via DXP pathway; isopentenyl diphosphate from 1-deoxy-D-xylulose 5-phosphate: step 4/6. Its function is as follows. Bifunctional enzyme that catalyzes the formation of 4-diphosphocytidyl-2-C-methyl-D-erythritol from CTP and 2-C-methyl-D-erythritol 4-phosphate (MEP) (IspD), and catalyzes the conversion of 4-diphosphocytidyl-2-C-methyl-D-erythritol 2-phosphate (CDP-ME2P) to 2-C-methyl-D-erythritol 2,4-cyclodiphosphate (ME-CPP) with a corresponding release of cytidine 5-monophosphate (CMP) (IspF). In Wolinella succinogenes (strain ATCC 29543 / DSM 1740 / CCUG 13145 / JCM 31913 / LMG 7466 / NCTC 11488 / FDC 602W) (Vibrio succinogenes), this protein is Bifunctional enzyme IspD/IspF.